The chain runs to 110 residues: Flagellar hook-basal body complex protein FliE (110 aa).

This sequence belongs to the FliE family.

Its subcellular location is the bacterial flagellum basal body. The polypeptide is Flagellar hook-basal body complex protein FliE (Ralstonia nicotianae (strain ATCC BAA-1114 / GMI1000) (Ralstonia solanacearum)).